The primary structure comprises 498 residues: ATP synthase subunit beta, chloroplastic (498 aa).

ATP is bound at residue G172–T179.

It belongs to the ATPase alpha/beta chains family. As to quaternary structure, F-type ATPases have 2 components, CF(1) - the catalytic core - and CF(0) - the membrane proton channel. CF(1) has five subunits: alpha(3), beta(3), gamma(1), delta(1), epsilon(1). CF(0) has four main subunits: a(1), b(1), b'(1) and c(9-12).

The protein resides in the plastid. It is found in the chloroplast thylakoid membrane. The catalysed reaction is ATP + H2O + 4 H(+)(in) = ADP + phosphate + 5 H(+)(out). Its function is as follows. Produces ATP from ADP in the presence of a proton gradient across the membrane. The catalytic sites are hosted primarily by the beta subunits. The protein is ATP synthase subunit beta, chloroplastic of Vitis vinifera (Grape).